The primary structure comprises 180 residues: Probable RNA 2'-phosphotransferase (180 aa).

Belongs to the KptA/TPT1 family.

Its function is as follows. Removes the 2'-phosphate from RNA via an intermediate in which the phosphate is ADP-ribosylated by NAD followed by a presumed transesterification to release the RNA and generate ADP-ribose 1''-2''-cyclic phosphate (APPR&gt;P). May function as an ADP-ribosylase. The chain is Probable RNA 2'-phosphotransferase from Thermococcus kodakarensis (strain ATCC BAA-918 / JCM 12380 / KOD1) (Pyrococcus kodakaraensis (strain KOD1)).